A 799-amino-acid chain; its full sequence is 1,4-alpha-glucan-branching enzyme 2, chloroplastic/amyloplastic (799 aa).

A chloroplast-targeting transit peptide spans 1-57 (MAFRVSGAVLGGAVRAPRLTGGGEGSLVFRHTGLFLTRGARVGCSGTHGAMRAAAAA). Trp196 and Lys232 together coordinate (1,4-alpha-D-glucosyl)n. Asp447 (nucleophile) is an active-site residue. Glu502 acts as the Proton donor in catalysis.

It belongs to the glycosyl hydrolase 13 family. GlgB subfamily. In terms of assembly, monomer.

The protein localises to the plastid. It localises to the chloroplast. Its subcellular location is the amyloplast. The catalysed reaction is Transfers a segment of a (1-&gt;4)-alpha-D-glucan chain to a primary hydroxy group in a similar glucan chain.. It participates in glycan biosynthesis; starch biosynthesis. In terms of biological role, catalyzes the formation of the alpha-1,6-glucosidic linkages in starch by scission of a 1,4-alpha-linked oligosaccharide from growing alpha-1,4-glucan chains and the subsequent attachment of the oligosaccharide to the alpha-1,6 position. In Zea mays (Maize), this protein is 1,4-alpha-glucan-branching enzyme 2, chloroplastic/amyloplastic (SBE1).